The following is a 165-amino-acid chain: Ribosome maturation factor RimM (165 aa).

One can recognise a PRC barrel domain in the interval 90–161 (PDTYYVSDLK…KIIIKPVGEW (72 aa)).

Belongs to the RimM family. As to quaternary structure, binds ribosomal protein uS19.

The protein resides in the cytoplasm. Its function is as follows. An accessory protein needed during the final step in the assembly of 30S ribosomal subunit, possibly for assembly of the head region. Essential for efficient processing of 16S rRNA. May be needed both before and after RbfA during the maturation of 16S rRNA. It has affinity for free ribosomal 30S subunits but not for 70S ribosomes. This chain is Ribosome maturation factor RimM, found in Clostridium beijerinckii (strain ATCC 51743 / NCIMB 8052) (Clostridium acetobutylicum).